The primary structure comprises 279 residues: DegV domain-containing protein SpyM3_1149 (279 aa).

One can recognise a DegV domain in the interval 4 to 278 (IKIVTDSSIT…EGAFAVMVRY (275 aa)). 2 residues coordinate hexadecanoate: Thr-62 and Ser-95.

Its function is as follows. May bind long-chain fatty acids, such as palmitate, and may play a role in lipid transport or fatty acid metabolism. The protein is DegV domain-containing protein SpyM3_1149 of Streptococcus pyogenes serotype M3 (strain ATCC BAA-595 / MGAS315).